We begin with the raw amino-acid sequence, 198 residues long: MEQATQQIAISDAAQAHFRKLLDTQEEGTNIRIFVVNPGTPNAECGVSYCPPNAVEESDIEMKYNTFSAFIDEVSLPFLEEAEIDYVTEELGAQLTLKAPNAKMRKVADDAPLIERVEYVIQTQINPQLANHGGRITLIEITEDGYAVLQFGGGCNGCSMVDVTLKDGVEKQLVSLFPNELKGAKDITEHQRGEHSYY.

[4Fe-4S] cluster contacts are provided by Cys155 and Cys158.

Belongs to the NfuA family. As to quaternary structure, homodimer. The cofactor is [4Fe-4S] cluster.

Its function is as follows. Involved in iron-sulfur cluster biogenesis. Binds a 4Fe-4S cluster, can transfer this cluster to apoproteins, and thereby intervenes in the maturation of Fe/S proteins. Could also act as a scaffold/chaperone for damaged Fe/S proteins. The protein is Fe/S biogenesis protein NfuA of Haemophilus influenzae (strain 86-028NP).